A 211-amino-acid chain; its full sequence is HTH-type transcriptional repressor FabR (211 aa).

The HTH tetR-type domain maps to 10-70 (RTRRSLVEAA…TMVDESGLML (61 aa)). The H-T-H motif DNA-binding region spans 33–52 (SLREVAREAGIAPTSFYRHF).

In terms of assembly, homodimer.

The protein resides in the cytoplasm. Its function is as follows. Represses the transcription of fabB, involved in unsaturated fatty acid (UFA) biosynthesis. By controlling UFA production, FabR directly influences the physical properties of the membrane bilayer. The protein is HTH-type transcriptional repressor FabR of Cronobacter sakazakii (strain ATCC BAA-894) (Enterobacter sakazakii).